A 763-amino-acid polypeptide reads, in one-letter code: Ras and Rab interactor 1 (763 aa).

The residue at position 1 (M1) is an N-acetylmethionine. The segment at 1-52 (MEDPGETGAHPLGATNLNFVPGHQQKEKPSTDPLYDTPDTRGVQAGGSQQPA) is disordered. At Y35 the chain carries Phosphotyrosine; by ABL1 and ABL2. In terms of domain architecture, SH2 spans 68–151 (WLQLRANAAA…QLICGYCRTR (84 aa)). Disordered stretches follow at residues 177-200 (LNTK…RSPQ), 238-273 (STET…PPRQ), and 301-331 (QEVD…RPRH). 4 positions are modified to phosphoserine: S198, S246, S319, and S323. Residues 245-257 (LSPPAVPPPPVPV) show a composition bias toward pro residues. Residues 316–326 (SSGSPTTSPRL) are compositionally biased toward low complexity. Phosphoserine; by PKD/PRKD1 is present on S340. The VPS9 domain maps to 445–587 (LSADGSLGRL…LSGLSQARAL (143 aa)). At S598 the chain carries Phosphoserine. The Ras-associating domain maps to 613–695 (FQHLLRVAYQ…GYLIYRRAER (83 aa)). At R681 the chain carries Omega-N-methylarginine. The interval 698 to 763 (TQGAVAEKAK…KAEGSQALEE (66 aa)) is disordered. Positions 727–755 (REGKPRIAVDQEGKDQARGGHIGPEEQKA) are enriched in basic and acidic residues.

This sequence belongs to the RIN (Ras interaction/interference) family. Interacts with the GTP-bound form of Ras proteins (NRAS, HRAS and KRAS). This interaction prevents the association between RAF1 and Ras. Interacts with 14-3-3 proteins YWHAB, YWHAE and YWHAZ when phosphorylated on Ser-340. Interacts with the SH3 domain of ABL1 and ABL2. Interacts with RAB5A. The interaction with Ras is probably regulated and antagonized by the interaction with 14-3-3 proteins. The interaction with 14-3-3 proteins is regulated by phosphorylation on Ser-340. Phosphorylated on tyrosine residues by ABL1 and ABL2. Phosphorylation at Ser-340 by PRKD1 induces interaction with 14-3-3 proteins. Highly expressed in brain. Weakly or no expressed in other tissues, except in testis, where it is expressed at intermediate level. In brain, it is mainly expressed in postnatal forebrain neurons in which it is localized in dendrites and colocalizes with Ras.

It localises to the cytoplasm. It is found in the membrane. The protein resides in the cytoskeleton. Functionally, ras effector protein, which may serve as an inhibitory modulator of neuronal plasticity in aversive memory formation. Can affect Ras signaling at different levels. First, by competing with RAF1 protein for binding to activated Ras. Second, by enhancing signaling from ABL1 and ABL2, which regulate cytoskeletal remodeling. Third, by activating RAB5A, possibly by functioning as a guanine nucleotide exchange factor (GEF) for RAB5A, by exchanging bound GDP for free GTP, and facilitating Ras-activated receptor endocytosis. The protein is Ras and Rab interactor 1 (Rin1) of Mus musculus (Mouse).